The sequence spans 164 residues: Peroxynitrite isomerase 2 (164 aa).

A GXWXGXG motif is present at residues 17–23; sequence GSWAGRG. Residue histidine 155 coordinates heme b.

This sequence belongs to the nitrobindin family. As to quaternary structure, homodimer. The cofactor is heme b.

The catalysed reaction is peroxynitrite = nitrate. Its pathway is nitrogen metabolism. Its function is as follows. Heme-binding protein able to scavenge peroxynitrite and to protect free L-tyrosine against peroxynitrite-mediated nitration, by acting as a peroxynitrite isomerase that converts peroxynitrite to nitrate. Therefore, this protein likely plays a role in peroxynitrite sensing and in the detoxification of reactive nitrogen and oxygen species (RNS and ROS, respectively). Is able to bind nitric oxide (NO) in vitro, but may act as a sensor of peroxynitrite levels in vivo. The protein is Peroxynitrite isomerase 2 of Mycobacterium bovis (strain BCG / Pasteur 1173P2).